Consider the following 505-residue polypeptide: Alpha-1-syntrophin (505 aa).

Residues 1-77 (MASGRRAPRT…AEPGAASPPL (77 aa)) are disordered. PH domains are found at residues 6–269 (RAPR…AQVN) and 293–401 (DIKR…DGCH). The region spanning 87–170 (RVTVRKADAG…EVVLEVKYMK (84 aa)) is the PDZ domain. Phosphoserine occurs at positions 101, 184, 189, 193, and 200. Positions 180-211 (ASGTSVGWDSPPASPLQRQPSSPGPPPRDLRD) are disordered. Residues 449–505 (PFEKLQMSSDDGASLLFLDFGGAEGEIQLDLHSCPKTMVFIIHSFLSAKVTRLGLLA) form the SU domain. The tract at residues 483 to 505 (PKTMVFIIHSFLSAKVTRLGLLA) is calmodulin-binding.

The protein belongs to the syntrophin family. In terms of assembly, monomer and homodimer. Interacts with the dystrophin related protein DTNA; SGCG of the dystrophin glycoprotein complex; NOS1; GRB2; GA; TGFA; MAPK12 and the sodium channel proteins SCN4A and SCN5A. Interacts with the dystrophin protein DMD in a calmodulin dependent manner and with related protein UTRN; SGCA of the dystrophin glycoprotein complex; F-actin; calmodulin and with the other members of the syntrophin family SNTB1 and SNTB2. Interacts with MYOC; regulates muscle hypertrophy. Interacts with DTNB. Post-translationally, phosphorylated by CaM-kinase II. Phosphorylation may inhibit the interaction with DMD.

It is found in the cell membrane. The protein resides in the sarcolemma. The protein localises to the cell junction. It localises to the cytoplasm. Its subcellular location is the cytoskeleton. Functionally, adapter protein that binds to and probably organizes the subcellular localization of a variety of membrane proteins. May link various receptors to the actin cytoskeleton and the extracellular matrix via the dystrophin glycoprotein complex. Plays an important role in synapse formation and in the organization of UTRN and acetylcholine receptors at the neuromuscular synapse. Binds to phosphatidylinositol 4,5-bisphosphate. This chain is Alpha-1-syntrophin (SNTA1), found in Bos taurus (Bovine).